A 950-amino-acid polypeptide reads, in one-letter code: MVYHWRGDLGSWRLLLLLLLLAAWKVGSGQLHYSVPEEAKHGTFVGRIAQDLGLELAELVPRLFRVASKRHRDLLEVNLQNGILFVNSRIDREELCGRSAECSIHLEVIVDRPLQVFHVDVEVKDVNDNPPVFRVKEQKLFVSESRMPDSRFPLEGASDADVGANSVLTYRLSFHDYFMLDVNSKNDENKLVELVLRKSLDREDAPAHDLFLTATDGGKPELTGTVQLLVTVLDVNDNAPNFEQSEYEVRIFENADNGTTVIKLNASDRDEGANGAISYSFNSLVETMVIDHFSIDRNTGEIVIRGNLDFEQENFYKIRIDATDKGHPPMAGHCTVLVRILDKNDNVPEIALTSLSLPVREDAQFGTVIALISVNDLDSGANGQVTCSLMPHVPFKLVSTFKNYYSLVLDSALDRESVSAYELVVTARDGGSPSLWATASLSVEVADVNDNAPAFAQPEYTVFVKENNPPGCHIFTVSARDADAQENALVSYSLVERRVGERSLSSYVSVHTESGKVYALQPLDHEELELLQFQVSARDAGVPPLGSNVTLQVFVLDENDNAPALLEPRVGGTGGSASELVPRSVGAGHVVAKVRAVDADSGYNAWLSYELQPAASSPRIPFRVGLYTGEISTTRVLDEADSPRHRLLVLVKDHGEPALTATATVLVSLVESGQAPKASSRQSAGVVGPEAALVDVNVYLIIAICAVSSLLVLTLLLYTALRCSALPTEGGCRAGKPTLVCSSAVGSWSYSQQQSQRVCSGEGPPKTDLMAFSPCLPPDLGSVDVGEERDLNVDHGLKPRQPNPDWRYSASLRAGMHSSVHLEEAGILRAGPGGPDQQWPTVSSATPEPEAGEVSPPVGAGVNSNSWTFKYGPGNPKQSGPGELPDKFIIPGSPAIISIRQEPANSQIDKSDFITFGKKEETKKKKKKKKGNKTQEKKEKGNSTTDNSDQ.

The first 29 residues, M1 to G29, serve as a signal peptide directing secretion. Cadherin domains are found at residues Q30 to F133, A157 to F242, E243 to I350, A351 to F455, A456 to L565, and V581 to A678. The Extracellular portion of the chain corresponds to Q30–N697. 2 N-linked (GlcNAc...) asparagine glycosylation sites follow: N257 and N265. N-linked (GlcNAc...) asparagine glycosylation occurs at N548. A helical transmembrane segment spans residues V698 to Y718. Topologically, residues T719–Q950 are cytoplasmic. 5 PXXP repeats span residues P774–P777, P799–P802, P832–P835, P873–P876, and P891–P894. Residues P774 to P894 are 5 X 4 AA repeats of P-X-X-P. Positions G831 to Q950 are disordered. Residues D909–K923 are compositionally biased toward basic and acidic residues.

It localises to the cell membrane. In terms of biological role, potential calcium-dependent cell-adhesion protein. May be involved in the establishment and maintenance of specific neuronal connections in the brain. This is Protocadherin alpha-8 (PCDHA8) from Pan troglodytes (Chimpanzee).